The primary structure comprises 562 residues: Glycine betaine/proline/choline/ectoine transporter VP1456 (562 aa).

12 helical membrane-spanning segments follow: residues 68 to 88 (PVFG…LLVE), 110 to 130 (FFMW…FSPL), 147 to 167 (VSWL…FWSV), 203 to 223 (WGVH…FFAF), 243 to 263 (AWGW…LFGL), 287 to 307 (GIGT…LSVV), 322 to 342 (MIVA…TAMG), 373 to 393 (WTVF…MFIA), 404 to 424 (FLFA…SVFG), 456 to 476 (VLPY…VFFI), 503 to 523 (IFWA…GGKE), and 531 to 551 (GVVA…VSLV).

It belongs to the BCCT transporter (TC 2.A.15) family.

Its subcellular location is the cell inner membrane. Involved in the uptake of osmoprotectants. Can transport glycine betaine, proline, choline and ectoine. The protein is Glycine betaine/proline/choline/ectoine transporter VP1456 of Vibrio parahaemolyticus serotype O3:K6 (strain RIMD 2210633).